The sequence spans 446 residues: Calcium-binding and coiled-coil domain-containing protein 2 (446 aa).

The short motif at 133 to 136 is the CLIR element; the sequence is ILVV. Residues 137–349 adopt a coiled-coil conformation; sequence TTQGEVEEIE…RENSRLLSYM (213 aa). Positions 203–206 match the LIR-like motif; the sequence is DYWE. Residues 371–381 are interaction with LGALS8; sequence NPGLVYGNPYS. The interval 395–446 is interaction with MYO6; it reads KKCPICKADDICDHILEQQQMQPLCLNCPICDKIFPATEKQIFEDHVFCHSL. The UBZ1-type zinc finger occupies 419-444; the sequence is CLNCPICDKIFPATEKQIFEDHVFCH. Residues Cys-422, Cys-425, His-440, and His-444 each contribute to the Zn(2+) site. At Ser-445 the chain carries Phosphoserine.

It belongs to the CALCOCO family. Dimer. Part of a complex consisting of CALCOCO2, TAX1BP1 and MYO6. Interacts with MYO6. Interacts with GEMIN4. Interacts with ATG8 family members MAP1LC3A, MAP1LC3B, GABARAP, GABARAPL1 and GABARAPL2. Interacts with ATG8 family member MAP1LC3C. Interacts with LGALS8. Interacts with TOM1; the interaction is indirect and is mediated by MYO6, which acts as a bridge between TOM1 and CALCOCO2. Interacts with AZI2.

It is found in the cytoplasm. It localises to the perinuclear region. The protein localises to the cytoskeleton. Its subcellular location is the cytoplasmic vesicle. The protein resides in the autophagosome membrane. Xenophagy-specific receptor required for autophagy-mediated intracellular bacteria degradation. Acts as an effector protein of galectin-sensed membrane damage that restricts the proliferation of infecting pathogens upon entry into the cytosol by targeting LGALS8-associated bacteria for autophagy. Initially orchestrates bacteria targeting to autophagosomes and subsequently ensures pathogen degradation by regulating pathogen-containing autophagosome maturation. Bacteria targeting to autophagosomes relies on its interaction with MAP1LC3A, MAP1LC3B and/or GABARAPL2, whereas regulation of pathogen-containing autophagosome maturation requires the interaction with MAP3LC3C. May play a role in ruffle formation and actin cytoskeleton organization and seems to negatively regulate constitutive secretion. This chain is Calcium-binding and coiled-coil domain-containing protein 2, found in Pongo abelii (Sumatran orangutan).